The primary structure comprises 833 residues: Copper-exporting P-type ATPase (833 aa).

2 consecutive HMA domains span residues 3-64 (QTID…YGAT) and 98-161 (ESQQ…YGAE). The Cu(+) site is built by C14, C17, C109, and C112. A run of 6 helical transmembrane segments spans residues 186–206 (WQAIVALAVGIPVMVWGMIGD), 217–237 (LWLAIGLITLAVMVFAGGHFY), 253–273 (TLVALGTGVAWLYSMSVNLWP), 283–303 (LYYEASAMIIGLINLGHMLEA), 437–457 (AVFVPVVVAIALFSAAIWYFF), and 463–483 (IVYTLVIATTVLIIACPCALG). D522 acts as the 4-aspartylphosphate intermediate in catalysis. Residues D719 and D723 each contribute to the Mg(2+) site. Transmembrane regions (helical) follow at residues 778 to 798 (LGAFIYNSIGIPVAAGILWPF) and 800 to 820 (GTLLNPVVAGAAMALSSITVV).

This sequence belongs to the cation transport ATPase (P-type) (TC 3.A.3) family. Type IB subfamily.

It is found in the cell inner membrane. The protein resides in the cytoplasm. It catalyses the reaction Cu(+)(in) + ATP + H2O = Cu(+)(out) + ADP + phosphate + H(+). In terms of biological role, involved in Cu(+) export. Essential for copper tolerance under both aerobic and anaerobic conditions. Probably also encodes a cytoplasmic copper chaperone CopA(Z) that is produced by programmed ribosomal frameshifting. The chain is Copper-exporting P-type ATPase (copA) from Salmonella typhimurium (strain LT2 / SGSC1412 / ATCC 700720).